A 244-amino-acid chain; its full sequence is MSVLDLNALNELPKVERVMALAETNAQLEKQDAEGRVAWALENLPGEYVLSSSFGIQAAVSLHLVNQVRPDIPVILTDTGYLFPETYQFIDELTEKLNLNLKVYRATESAAWQEARYGKLWEQGVEGIEKYNDINKVEPMNRALKELNAQTWFAGLRREQSGSRAHLPVLAIQRGVFKVLPIIDWDNRTVYQYLQKHGLKYHPLWDQGYLSVGDTHTTRKWEPGMAEEETRFFGLKRECGLHEG.

The active-site Nucleophile; cysteine thiosulfonate intermediate is the Cys239.

It belongs to the PAPS reductase family. CysH subfamily.

The protein localises to the cytoplasm. The enzyme catalyses [thioredoxin]-disulfide + sulfite + adenosine 3',5'-bisphosphate + 2 H(+) = [thioredoxin]-dithiol + 3'-phosphoadenylyl sulfate. Its pathway is sulfur metabolism; hydrogen sulfide biosynthesis; sulfite from sulfate: step 3/3. In terms of biological role, catalyzes the formation of sulfite from phosphoadenosine 5'-phosphosulfate (PAPS) using thioredoxin as an electron donor. This is Phosphoadenosine 5'-phosphosulfate reductase from Citrobacter koseri (strain ATCC BAA-895 / CDC 4225-83 / SGSC4696).